Here is a 310-residue protein sequence, read N- to C-terminus: DDRGK domain-containing protein 1 (310 aa).

The helical transmembrane segment at 1-21 threads the bilayer; that stretch reads MAAIIYLAIAAVASILLFVAV. Over 22–310 the chain is Cytoplasmic; it reads KLLSTDTKTE…DSPAEISVNA (289 aa). 2 disordered regions span residues 38–85 and 110–162; these read VGEL…DEYQ and KAEK…LKEE. The segment covering 52–70 has biased composition (basic residues); sequence PRARARRGLRNKTNRSKTQ. Over residues 76-85 the composition is skewed to acidic residues; that stretch reads DYDDYDDEYQ.

The protein belongs to the DDRGK1 family.

It is found in the endoplasmic reticulum membrane. In terms of biological role, substrate adapter for ufmylation, the covalent attachment of the ubiquitin-like modifier UFM1 to substrate proteins. The polypeptide is DDRGK domain-containing protein 1 (Trichoplax adhaerens (Trichoplax reptans)).